The sequence spans 150 residues: Soluble pyridine nucleotide transhydrogenase (150 aa).

The protein belongs to the class-I pyridine nucleotide-disulfide oxidoreductase family. It depends on FAD as a cofactor.

The protein resides in the cytoplasm. It catalyses the reaction NAD(+) + NADPH = NADH + NADP(+). Functionally, conversion of NADPH, generated by peripheral catabolic pathways, to NADH, which can enter the respiratory chain for energy generation. This is Soluble pyridine nucleotide transhydrogenase (sthA) from Pectobacterium carotovorum subsp. carotovorum (Erwinia carotovora subsp. carotovora).